The chain runs to 213 residues: Large ribosomal subunit protein uL4 (213 aa).

A disordered region spans residues 51 to 90 (TASTLTKAEVRGGGRKPYKQKHTGRARQGSIRNPHYVGGG). The segment covering 63–75 (GGRKPYKQKHTGR) has biased composition (basic residues).

Belongs to the universal ribosomal protein uL4 family. As to quaternary structure, part of the 50S ribosomal subunit.

Its function is as follows. One of the primary rRNA binding proteins, this protein initially binds near the 5'-end of the 23S rRNA. It is important during the early stages of 50S assembly. It makes multiple contacts with different domains of the 23S rRNA in the assembled 50S subunit and ribosome. In terms of biological role, forms part of the polypeptide exit tunnel. This chain is Large ribosomal subunit protein uL4, found in Malacoplasma penetrans (strain HF-2) (Mycoplasma penetrans).